Reading from the N-terminus, the 704-residue chain is MGERARSPDIEQGKKGGKHPYSHYSSDLGSSPQSSGPSSPVNTTPCASTREKNPKRHLSDNQVHHPTVRKVSPKAVPSKKGIRVGFRSQSLNREPLRKDPDIVTKRVLSARLLKINELQNEVSELQVKLAQLLKENKALKSLQYRQEKALNKFEDAENEISQLIHRHNNEITALKERLRKSQEKERATEKRVKETEGELFRTKFSLQKLKKISEARHLPERDDLAKKLVSAELKLDDTERKIKELSKNLELSTNSFQRQLLAERKRAFEAYDENKVLQKELQRLHHKLKEKEKELDIKNIYANRLPKSSPKKEKEIERKHVSCQSDFTDQCTKGVQTAEDFELEDFPFTAQTVLCYENRWDEPEYLSSYLEYQDLNKHGSEMLSSVLGQEGKYDEDEDPCSAKQEARKPESEWAREELDKVKGKSALLGRAEKLALEAGRFPTENYQAQSVDKFEDEAERLKTEMLLAKLNEINKELQDPQNLGRAPLPLLPNFESKLHSPDRSTRPYSFPESLDRSFNGQHLQDLSFLTPRGEGGSPGPIRSPGQIRSPAPLDEFSFGSYVPSFGKTLGKSNPPSQKSSLLDFQSNSSESPSKDSLDLMSRKEKKATLMEQLFGPSASNTSVSSKSTDPHFPAASRGDMDPLHFLSGDRNSRVREPGDEEEDLFLREGRSFNPNRHRLKHASNKPTVTAVDSVDEDIEEVTLR.

Residues Met-1 to Lys-14 are compositionally biased toward basic and acidic residues. The disordered stretch occupies residues Met-1 to Lys-80. Position 7 is a phosphoserine (Ser-7). Low complexity predominate over residues Ser-25–Pro-40. Ser-48 is modified (phosphoserine). Residues Thr-49 to Val-63 are compositionally biased toward basic and acidic residues. The stretch at Lys-105 to Ile-300 forms a coiled coil. Disordered regions lie at residues Gln-389–Glu-417 and Glu-476–Glu-661. The segment covering Gln-404–Glu-417 has biased composition (basic and acidic residues). Residues Ala-448–Asp-479 adopt a coiled-coil conformation. Residues Ser-496–Thr-505 are compositionally biased toward basic and acidic residues. The segment covering Gly-570–Ser-591 has biased composition (polar residues). Positions Pro-592 to Thr-608 are enriched in basic and acidic residues. The segment covering Ser-617 to Ser-627 has biased composition (low complexity).

Belongs to the LCA5 family. As to quaternary structure, interacts with NINL. Interacts with OFD1. Interacts with FAM161A. Interacts with components of the IFT complex B. As to expression, detected in several tissues.

Its subcellular location is the cytoplasm. It localises to the cytoskeleton. It is found in the cilium axoneme. The protein resides in the cilium basal body. The protein localises to the cell projection. Its subcellular location is the cilium. Its function is as follows. Involved in intraflagellar protein (IFT) transport in photoreceptor cilia. The polypeptide is Lebercilin (Lca5) (Mus musculus (Mouse)).